The primary structure comprises 285 residues: Secreted RxLR effector protein 106 (285 aa).

The signal sequence occupies residues Met1–Ser24. The short motif at Arg42 to Arg54 is the RxLR-dEER element. 2 N-linked (GlcNAc...) asparagine glycosylation sites follow: Asn182 and Asn187. Over residues Ile220–Gly229 the composition is skewed to basic and acidic residues. Residues Ile220–Leu262 form a disordered region. Residues Arg239–Arg264 carry the Bipartite nuclear localization signal motif.

Belongs to the RxLR effector family. In terms of assembly, interacts with host RCD1 and SRO1 transcription co-regulators.

It is found in the secreted. The protein resides in the host nucleus. Its function is as follows. Secreted effector that suppresses pathogen-associated molecular pattern (PAMP)-triggered immunity (PTI) in host plants. Binds to RCD1 and SRO1 transcription co-regulators to attenuate transcriptional activation of salicylic acid (SA)-induced defense genes and alters plant growth responses to light. Suppresses SA signal transduction but not SA levels. The chain is Secreted RxLR effector protein 106 from Hyaloperonospora arabidopsidis (strain Emoy2) (Downy mildew agent).